Consider the following 591-residue polypeptide: Aspartate--tRNA(Asp/Asn) ligase (591 aa).

Residue Glu175 coordinates L-aspartate. Positions 199–202 (QQFK) are aspartate. 2 residues coordinate L-aspartate: Arg221 and His453. Residue 221–223 (RDE) coordinates ATP. Glu486 provides a ligand contact to ATP. Arg493 contacts L-aspartate. 538-541 (GIDR) serves as a coordination point for ATP.

It belongs to the class-II aminoacyl-tRNA synthetase family. Type 1 subfamily. In terms of assembly, homodimer.

It localises to the cytoplasm. It catalyses the reaction tRNA(Asx) + L-aspartate + ATP = L-aspartyl-tRNA(Asx) + AMP + diphosphate. Aspartyl-tRNA synthetase with relaxed tRNA specificity since it is able to aspartylate not only its cognate tRNA(Asp) but also tRNA(Asn). Reaction proceeds in two steps: L-aspartate is first activated by ATP to form Asp-AMP and then transferred to the acceptor end of tRNA(Asp/Asn). This chain is Aspartate--tRNA(Asp/Asn) ligase, found in Paracoccus denitrificans (strain Pd 1222).